Reading from the N-terminus, the 282-residue chain is Putative SWIB domain-containing protein 070L (282 aa).

Low complexity predominate over residues 1-16 (MFQTTPKQVKPTTVPK). Residues 1–21 (MFQTTPKQVKPTTVPKTGRKN) are disordered. In terms of domain architecture, SWIB/MDM2 spans 97 to 181 (GLEKPRMISE…QKYLKHCFDE (85 aa)). Positions 199–282 (TDDQTTAEEA…KVKKEHKIKK (84 aa)) are disordered. Positions 262-275 (GKKDKENIPLEKVK) are enriched in basic and acidic residues.

It belongs to the IIV-6 306R family.

The chain is Putative SWIB domain-containing protein 070L from Invertebrate iridescent virus 3 (IIV-3).